The sequence spans 155 residues: Small ribosomal subunit protein uS7c (155 aa).

The protein belongs to the universal ribosomal protein uS7 family. As to quaternary structure, part of the 30S ribosomal subunit.

It localises to the plastid. It is found in the chloroplast. One of the primary rRNA binding proteins, it binds directly to 16S rRNA where it nucleates assembly of the head domain of the 30S subunit. This is Small ribosomal subunit protein uS7c (rps7) from Hydrastis canadensis (Goldenseal).